The following is a 115-amino-acid chain: Large ribosomal subunit protein uL18 (115 aa).

Positions 1–29 (MISKPDKNKLRQKRHTRVRGKISGTSETP) are disordered. Positions 10–20 (LRQKRHTRVRG) are enriched in basic residues.

The protein belongs to the universal ribosomal protein uL18 family. Part of the 50S ribosomal subunit; part of the 5S rRNA/L5/L18/L25 subcomplex. Contacts the 5S and 23S rRNAs.

Functionally, this is one of the proteins that bind and probably mediate the attachment of the 5S RNA into the large ribosomal subunit, where it forms part of the central protuberance. The polypeptide is Large ribosomal subunit protein uL18 (Lactococcus lactis subsp. lactis (strain IL1403) (Streptococcus lactis)).